We begin with the raw amino-acid sequence, 1146 residues long: Ankyrin repeat and fibronectin type-III domain-containing protein 1 (1146 aa).

2 ANK repeats span residues 133–162 (QGNE…PEEL) and 170–199 (EGLT…RESP). In terms of domain architecture, Fibronectin type-III spans 270–366 (MPTNVCLMVT…TTTPACASPS (97 aa)). Residues 607 to 614 (GLYLGYLK) form a highly conserved peptide sequence region. Disordered regions lie at residues 855 to 887 (NSTS…QPCS), 945 to 964 (VKTP…NPDH), and 1106 to 1146 (PWAS…SSML). The span at 1131–1146 (EGPTASPMSEILSSML) shows a compositional bias: polar residues.

May play a role in neuronal function. The protein is Ankyrin repeat and fibronectin type-III domain-containing protein 1 of Homo sapiens (Human).